Here is a 203-residue protein sequence, read N- to C-terminus: Ribosome maturation factor RimP (203 aa).

The segment at 184–203 (RRGSAPVEDEEGEGEAPTAH) is disordered.

Belongs to the RimP family.

It localises to the cytoplasm. Required for maturation of 30S ribosomal subunits. The polypeptide is Ribosome maturation factor RimP (Methylobacterium nodulans (strain LMG 21967 / CNCM I-2342 / ORS 2060)).